The sequence spans 320 residues: MRSAQVYRWQIPMDAGVVLRDRRLKTRDGLYVCLRDGEREGWGEISPLPGFSQETWEEAQTALLTWVNDWLQGSEGLPEMPSVAFGASCALAELTGVLPEAADYRAAPLCTGDPDDLVLRLADMPGEKIAKVKVGLYEAVRDGMVVNLLLEAIPDLHLRLDANRAWTPLKAQQFAKYVNPDYRARIAFLEEPCKTRDDSRGFARETGIAIAWDESLREADFTFEAEEGVRAVVIKPTLTGSLDKVREQVAAAHALGLTAVISSSIESSLGLTQLARIAAWLTPGTLPGLDTLHLMQAQQIRPWPGSALPCLKREELERLL.

Catalysis depends on Lys133, which acts as the Proton donor. Positions 161, 190, and 213 each coordinate Mg(2+). Lys235 (proton acceptor) is an active-site residue.

Belongs to the mandelate racemase/muconate lactonizing enzyme family. MenC type 1 subfamily. A divalent metal cation is required as a cofactor.

The enzyme catalyses (1R,6R)-6-hydroxy-2-succinyl-cyclohexa-2,4-diene-1-carboxylate = 2-succinylbenzoate + H2O. Its pathway is quinol/quinone metabolism; 1,4-dihydroxy-2-naphthoate biosynthesis; 1,4-dihydroxy-2-naphthoate from chorismate: step 4/7. It participates in quinol/quinone metabolism; menaquinone biosynthesis. Its function is as follows. Converts 2-succinyl-6-hydroxy-2,4-cyclohexadiene-1-carboxylate (SHCHC) to 2-succinylbenzoate (OSB). The polypeptide is o-succinylbenzoate synthase (Salmonella paratyphi C (strain RKS4594)).